Consider the following 70-residue polypeptide: MTKIVLKPGEPVEVAMRRFRRAILQTGLIVELKSRTAYEKPTTERKRKKKAAEARLRKRLRMQMLPKKLY.

Belongs to the bacterial ribosomal protein bS21 family.

This Cupriavidus pinatubonensis (strain JMP 134 / LMG 1197) (Cupriavidus necator (strain JMP 134)) protein is Small ribosomal subunit protein bS21.